Here is a 68-residue protein sequence, read N- to C-terminus: Large ribosomal subunit protein bL35 (68 aa).

This sequence belongs to the bacterial ribosomal protein bL35 family.

In Aster yellows witches'-broom phytoplasma (strain AYWB), this protein is Large ribosomal subunit protein bL35.